Consider the following 216-residue polypeptide: RNA pyrophosphohydrolase (216 aa).

The Nudix hydrolase domain maps to 6–149 (GFRPNVGIIL…KRDVYQLALT (144 aa)). Residues 38–59 (GGIKYGETPMQAMYRELHEETG) carry the Nudix box motif.

Belongs to the Nudix hydrolase family. RppH subfamily. It depends on a divalent metal cation as a cofactor.

Functionally, accelerates the degradation of transcripts by removing pyrophosphate from the 5'-end of triphosphorylated RNA, leading to a more labile monophosphorylated state that can stimulate subsequent ribonuclease cleavage. The sequence is that of RNA pyrophosphohydrolase from Burkholderia ambifaria (strain MC40-6).